Consider the following 1004-residue polypeptide: Protein Wnt-5 (1004 aa).

The N-terminal stretch at 1–29 (MSCYRKRHFLLWLLRAVCMLHLTARGAYA) is a signal peptide. Asparagine 60, asparagine 66, asparagine 115, and asparagine 219 each carry an N-linked (GlcNAc...) asparagine glycan. The interval 238 to 298 (QKDKAKTSGA…NPGEQPIGGY (61 aa)) is disordered. N-linked (GlcNAc...) asparagine glycans are attached at residues asparagine 307 and asparagine 341. The segment at 310 to 407 (LLKPTDTDSH…ERDEWFRGQS (98 aa)) is disordered. Positions 389–403 (RREEQQRQRERDEWF) are enriched in basic and acidic residues. Residue asparagine 422 is glycosylated (N-linked (GlcNAc...) asparagine). Residues 438 to 472 (KVSSEGSDGELLSRVERSQPSISSSSSSSSSSSRK) are disordered. The span at 458–470 (SISSSSSSSSSSS) shows a compositional bias: low complexity. N-linked (GlcNAc...) asparagine glycans are attached at residues asparagine 484, asparagine 485, asparagine 528, and asparagine 593. 3 disulfide bridges follow: cysteine 583–cysteine 594, cysteine 633–cysteine 641, and cysteine 643–cysteine 661. N-linked (GlcNAc...) asparagine glycosylation occurs at asparagine 724. Residues 790–822 (FFKGEQQPRKKKRKNQRAAADAPAYPRNGIKES) form a disordered region. 8 cysteine pairs are disulfide-bonded: cysteine 862–cysteine 876, cysteine 864–cysteine 871, cysteine 933–cysteine 964, cysteine 949–cysteine 959, cysteine 963–cysteine 1003, cysteine 979–cysteine 994, cysteine 981–cysteine 991, and cysteine 986–cysteine 987. A lipid anchor (O-palmitoleoyl serine; by PORCN) is attached at serine 868. Asparagine 952 carries an N-linked (GlcNAc...) asparagine glycan.

Belongs to the Wnt family. In terms of assembly, interacts with porcupine (por). In terms of processing, glycosylated, glycosylation is stimulated by porcupine at the ER. Post-translationally, palmitoleoylated by porcupine. The lipid group functions as a sorting signal, targeting the ligand to polarized vesicles that transport Wnt5 to unique sites at the cell surface. Depalmitoleoylated by notum, leading to inhibit Wnt signaling pathway. As to expression, dynamic expression pattern during embryogenesis. Expression is seen in the limb primordia of the head and thoracic segments, mesodermal and neurogenic regions.

It localises to the secreted. It is found in the extracellular space. Its subcellular location is the extracellular matrix. Functionally, binds as a ligand to a family of frizzled seven-transmembrane receptors and acts through a cascade of genes on the nucleus. Probable developmental protein. May be a signaling molecule which affects the development of discrete regions of tissues. Is likely to signal over only few cell diameters. May have a role in limb and CNS development; may be a downstream target of Dll that acts in the specification of these primordia. The protein is Protein Wnt-5 (Wnt5) of Drosophila melanogaster (Fruit fly).